A 716-amino-acid polypeptide reads, in one-letter code: Zinc finger protein on ecdysone puffs (716 aa).

Disordered regions lie at residues 103–168 and 182–208; these read PSLL…GGIR and KNAN…ESPY. Over residues 188–203 the composition is skewed to basic and acidic residues; sequence KKKEPTPGEKKIESPT. The residue at position 201 (Ser-201) is a Phosphoserine. The residue at position 203 (Thr-203) is a Phosphothreonine. Residue Ser-206 is modified to Phosphoserine. The C2H2-type 1 zinc-finger motif lies at 216–240; that stretch reads FYCHLCKKHMWDANSFENHIKGRTH. Residues 288–310 form a C2H2-type 2; atypical zinc finger; the sequence is DYCTMCDLNFHGHISTHRKSEGH. The C2H2-type 3 zinc-finger motif lies at 319–343; it reads PKCIECNKEFATRIDYDTHLLSAEH. Over residues 350–359 the composition is skewed to basic and acidic residues; the sequence is NNTKVGERKR. The segment at 350–447 is disordered; that stretch reads NNTKVGERKR…EEEEVALPVD (98 aa). The Nuclear localization signal signature appears at 379-383; it reads KRKKK. Positions 386–401 are enriched in basic and acidic residues; that stretch reads KKEGEAADGEAKKEGA. Residues 405–414 are compositionally biased toward acidic residues; sequence EGAEGDEAEG. Residues 415–431 are compositionally biased toward basic and acidic residues; it reads EEAKEGEEAADETKEGD. Acidic residues predominate over residues 432–447; that stretch reads ELNESQEEEEVALPVD. Residues 489 to 513 form a C2H2-type 4 zinc finger; that stretch reads YECSVCSKFFDTEVTAEIHSRTATH. The segment at 534-716 is disordered; sequence RAAAALEENE…QRARGRYNRY (183 aa). Positions 541–551 are enriched in basic and acidic residues; the sequence is ENERKKRKVEE. A Nuclear localization signal motif is present at residues 544 to 548; sequence RKKRK. A compositionally biased stretch (acidic residues) spans 560–638; sequence AAEETTEGAE…GQEGEQEPEP (79 aa). Positions 639–656 are enriched in pro residues; the sequence is EPAPVQTPAPAEPAPPAK. The span at 657 to 704 shows a compositional bias: low complexity; it reads TPAKTPTKAAAPAAVASPAAAATSADASPSPAKKATPARAAAGAKATP. Residues Ser-673, Ser-684, and Ser-686 each carry the phosphoserine modification. Residue Thr-692 is modified to Phosphothreonine. Basic residues predominate over residues 707-716; that stretch reads QRARGRYNRY.

It localises to the nucleus. The protein resides in the chromosome. Functionally, may play a role in the process of early and late gene activation, or possibly in RNA processing, for a defined set of developmentally regulated loci. The sequence is that of Zinc finger protein on ecdysone puffs (Pep) from Drosophila melanogaster (Fruit fly).